The following is a 1883-amino-acid chain: Zinc finger protein 106 (1883 aa).

Glycyl lysine isopeptide (Lys-Gly) (interchain with G-Cter in SUMO2) cross-links involve residues I6 and K37. A C2H2-type 1; atypical zinc finger spans residues 20 to 44; sequence HECRVCGVTEVGLSAYAKHISGQLH. A disordered region spans residues 39–162; that stretch reads ISGQLHKDNV…NGGGPRGRSG (124 aa). The segment covering 52–67 has biased composition (acidic residues); sequence EREDDGKGEEEEEDYF. Glycyl lysine isopeptide (Lys-Gly) (interchain with G-Cter in SUMO2) cross-links involve residues K69 and K76. Basic and acidic residues-rich tracts occupy residues 77–86, 96–116, and 128–138; these read QRKEQSRQDE, SDDR…DRES, and PQRDWKWEKDG. K133 is covalently cross-linked (Glycyl lysine isopeptide (Lys-Gly) (interchain with G-Cter in SUMO2)). Polar residues predominate over residues 139–148; that stretch reads FNNTRKNSFP. Residues K243, K287, and K305 each participate in a glycyl lysine isopeptide (Lys-Gly) (interchain with G-Cter in SUMO2) cross-link. A compositionally biased stretch (polar residues) spans 322 to 338; it reads QTTKQADTATSKVSGKN. A disordered region spans residues 322-356; it reads QTTKQADTATSKVSGKNGSAAREKPRRWTPYPSQK. Residues K356, K365, K371, and K417 each participate in a glycyl lysine isopeptide (Lys-Gly) (interchain with G-Cter in SUMO2) cross-link. The segment at 389 to 423 is disordered; sequence IQEPQTDETRNSPTQKTQKEIHTGSLNHKASSDSA. The segment covering 412 to 423 has biased composition (polar residues); that stretch reads GSLNHKASSDSA. Position 422 is a phosphoserine (S422). Glycyl lysine isopeptide (Lys-Gly) (interchain with G-Cter in SUMO2) cross-links involve residues K451, K461, K477, K492, K505, K515, K525, K539, and K557. The segment at 457–501 is disordered; that stretch reads CPATKSLSQKQDPKNISKNTKTNFFSPGEHSNPSNKPTVEDNHGP. Residues 461–493 are compositionally biased toward polar residues; it reads KSLSQKQDPKNISKNTKTNFFSPGEHSNPSNKP. The segment at 586–637 is disordered; sequence LEDESDGETSDTEKHGTKIGTLGSATTELLSGSTRTADEKEEDDRILKTSRE. S590 bears the Phosphoserine mark. K603 is covalently cross-linked (Glycyl lysine isopeptide (Lys-Gly) (interchain with G-Cter in SUMO2)). Over residues 608–620 the composition is skewed to polar residues; that stretch reads GSATTELLSGSTR. Residues S641 and S661 each carry the phosphoserine modification. Residues K671, K684, K705, K721, K741, K775, and K807 each participate in a glycyl lysine isopeptide (Lys-Gly) (interchain with G-Cter in SUMO2) cross-link. A phosphoserine mark is found at S859, S861, S864, and S893. Residues 879 to 945 are disordered; it reads EEGTGKENEP…HSAQLSSDHI (67 aa). Polar residues predominate over residues 888–906; it reads PQQMVSPSNSLRAGQSQKA. Residues K905 and K911 each participate in a glycyl lysine isopeptide (Lys-Gly) (interchain with G-Cter in SUMO2) cross-link. At S937 the chain carries Phosphoserine. A Glycyl lysine isopeptide (Lys-Gly) (interchain with G-Cter in SUMO2) cross-link involves residue K953. Over residues 958-976 the composition is skewed to polar residues; the sequence is QERSIPPSENQNSQESNGE. Disordered regions lie at residues 958 to 982, 997 to 1048, 1121 to 1140, and 1182 to 1218; these read QERS…CLSS, ATDS…KERS, EPSE…RRNS, and PTFQ…VPPS. T1021 carries the post-translational modification Phosphothreonine. S1025, S1026, and S1031 each carry phosphoserine. Positions 1035–1045 are enriched in basic residues; it reads KNKRRKIKGKK. Residue S1249 is modified to Phosphoserine. The segment at 1252-1483 is disordered; sequence ESTESFHEPS…EVSSTSEIGT (232 aa). The segment covering 1255–1277 has biased composition (basic and acidic residues); the sequence is ESFHEPSQELKFSVEQRNTRNRE. A Glycyl lysine isopeptide (Lys-Gly) (interchain with G-Cter in SUMO2) cross-link involves residue K1265. Composition is skewed to polar residues over residues 1278–1291 and 1299–1312; these read NSPS…SSIN and KGNS…SSFL. S1279, S1281, and S1284 each carry phosphoserine. A Glycyl lysine isopeptide (Lys-Gly) (interchain with G-Cter in SUMO2) cross-link involves residue K1299. S1302 bears the Phosphoserine mark. K1324 is covalently cross-linked (Glycyl lysine isopeptide (Lys-Gly) (interchain with G-Cter in SUMO2)). S1328 is subject to Phosphoserine. Polar residues predominate over residues 1333-1346; that stretch reads PEQQAESTLTSAET. The span at 1349 to 1362 shows a compositional bias: basic residues; the sequence is SKKKKKLRKKKSLR. S1370 carries the phosphoserine modification. Position 1372 is a phosphothreonine (T1372). Residues K1380, K1392, and K1395 each participate in a glycyl lysine isopeptide (Lys-Gly) (interchain with G-Cter in SUMO2) cross-link. Basic and acidic residues-rich tracts occupy residues 1402–1416 and 1444–1456; these read EDSR…VRDE and GEEK…KKDI. A Glycyl lysine isopeptide (Lys-Gly) (interchain with G-Cter in SUMO2) cross-link involves residue K1454. Positions 1457–1481 are enriched in polar residues; the sequence is WNSTEQNPLETSRSGCDEVSSTSEI. Position 1468 is a phosphoserine (S1468). Glycyl lysine isopeptide (Lys-Gly) (interchain with G-Cter in SUMO2) cross-links involve residues K1486 and K1504. A compositionally biased stretch (polar residues) spans 1502-1513; it reads SIKGSKNSSEIS. The segment at 1502–1527 is disordered; the sequence is SIKGSKNSSEISSEPGDDDEPTEGSF. 6 WD repeats span residues 1529-1568, 1570-1611, 1654-1695, 1698-1737, 1738-1775, and 1778-1815; these read GHQA…GVFE, HTSK…CVEQ, HGPR…LLRT, GHSK…RIYK, GHNH…RLQV, and GHKD…NYRC. K1585 is covalently cross-linked (Glycyl lysine isopeptide (Lys-Gly) (interchain with G-Cter in SUMO2)). Residue K1737 forms a Glycyl lysine isopeptide (Lys-Gly) (interchain with G-Cter in SUMO2) linkage. A C2H2-type 2; atypical zinc finger spans residues 1813–1838; it reads YRCWWHGCSLIFGVVDHLKQHLLTDH. A Glycyl lysine isopeptide (Lys-Gly) (interchain with G-Cter in SUMO2) cross-link involves residue K1864.

As to quaternary structure, interacts with KNOP1. Interacts with TARDBP and NUP107. Interacts (via N-terminus) with RBM39. Interacts with the SH3 domains of FYN and GRB2. Post-translationally, phosphorylated by FYN in vitro.

Its subcellular location is the nucleus. The protein resides in the nucleolus. It is found in the nucleus speckle. RNA-binding protein. Specifically binds to 5'-GGGGCC-3' sequence repeats in RNA. Essential for maintenance of peripheral motor neuron and skeletal muscle function. Required for normal expression and/or alternative splicing of a number of genes in spinal cord and skeletal muscle, including the neurite outgrowth inhibitor RTN4. Also contributes to normal mitochondrial respiratory function in motor neurons, via an unknown mechanism. This Homo sapiens (Human) protein is Zinc finger protein 106 (ZNF106).